Reading from the N-terminus, the 411-residue chain is Z-DNA-binding protein 1 (411 aa).

Z-binding domains lie at 8–70 and 84–148; these read LSTG…SIGG and SSAQ…HSRQ. Residues lysine 17 and lysine 43 each participate in a glycyl lysine isopeptide (Lys-Gly) (interchain with G-Cter in ubiquitin) cross-link. Positions 60-86 are disordered; the sequence is SPEPATWSIGGAASGDGAPAIPENSSA. 2 consecutive short sequence motifs (RIP homotypic interaction motif (RHIM)) follow at residues 188-205 and 237-261; these read NSNAIQIGHGNVIVREKA and YIYMDKSLLQQVQLGHHNEMSLVGD. Disordered regions lie at residues 263 to 303 and 332 to 411; these read GKHP…EGDT and KGEV…LSKQ. Composition is skewed to polar residues over residues 268-292, 350-371, and 400-411; these read YSFSDSPPEVSTTTADPGASFNMQT, GTSSEATPPRSCQHTPSDSMLP, and IESSQDTGLSKQ.

In terms of assembly, homodimer. Interacts (via RIP homotypic interaction motif) with RIPK3; leading to RIPK3 activation and necroptosis; interaction is enhanced by CASP6. Interacts (via RIP homotypic interaction motif) with RIPK1. Component of the AIM2 PANoptosome complex, a multiprotein complex that drives inflammatory cell death (PANoptosis). (Microbial infection) Interacts (via RIP homotypic interaction motif) with murid herpesvirus protein RIR1 (via RIP homotypic interaction motif); leading to inhibition of ZBP1-dependent necroptosis. As to quaternary structure, (Microbial infection) Interacts with vaccinia virus E3 protein; leading to inhibit ZBP1-dependent necroptosis. In terms of processing, ubiquitinated; polyubiquitinated following influenza A virus (IAV) infection. Post-translationally, phosphorylated. In terms of tissue distribution, expressed in lung, spleen and liver. Lower levels were seen in heart, kidney and testis. Expression is greatly up-regulated in tumor stromal cells and activated macrophages.

The protein resides in the cytoplasm. It localises to the nucleus. With respect to regulation, ZBP1-dependent necroptosis is normally inhibited by RIPK1: RIPK1 inhibits the ZBP1-induced activation of RIPK3 via FADD-mediated recruitment of CASP8, which cleaves RIPK1 and limits TNF-induced necroptosis. Its function is as follows. Key innate sensor that recognizes and binds Z-RNA structures, which are produced by a number of viruses, such as herpesvirus, orthomyxovirus or flavivirus, and triggers different forms of cell death. ZBP1 acts as an essential mediator of pyroptosis, necroptosis and apoptosis (PANoptosis), an integral part of host defense against pathogens, by activating RIPK3, caspase-8 (CASP8), and the NLRP3 inflammasome. Key activator of necroptosis, a programmed cell death process in response to death-inducing TNF-alpha family members, via its ability to bind Z-RNA: once activated upon Z-RNA-binding, ZBP1 interacts and stimulates RIPK3 kinase, which phosphorylates and activates MLKL, triggering execution of programmed necrosis. In addition to TNF-induced necroptosis, necroptosis can also take place in the nucleus in response to orthomyxoviruses infection: ZBP1 recognizes and binds Z-RNA structures that are produced in infected nuclei by orthomyxoviruses, such as the influenza A virus (IAV), leading to ZBP1 activation, RIPK3 stimulation and subsequent MLKL phosphorylation, triggering disruption of the nuclear envelope and leakage of cellular DNA into the cytosol. ZBP1-dependent cell death in response to IAV infection promotes interleukin-1 alpha (IL1A) induction in an NLRP3-inflammasome-independent manner: IL1A expression is required for the optimal interleukin-1 beta (IL1B) production, and together, these cytokines promote infiltration of inflammatory neutrophils to the lung, leading to the formation of neutrophil extracellular traps. In addition to its direct role in driving necroptosis via its ability to sense Z-RNAs, also involved in PANoptosis triggered in response to bacterial infection: component of the AIM2 PANoptosome complex, a multiprotein complex that triggers PANoptosis. Also acts as the apical sensor of fungal infection responsible for activating PANoptosis. Involved in CASP8-mediated cell death via its interaction with RIPK1 but independently of its ability to sense Z-RNAs. In some cell types, also able to restrict viral replication by promoting cell death-independent responses. In response to flavivirus infection in neurons, promotes a cell death-independent pathway that restricts viral replication: together with RIPK3, promotes a death-independent transcriptional program that modifies the cellular metabolism via up-regulation expression of the enzyme ACOD1/IRG1 and production of the metabolite itaconate. Itaconate inhibits the activity of succinate dehydrogenase, generating a metabolic state in neurons that suppresses replication of viral genomes. This Mus musculus (Mouse) protein is Z-DNA-binding protein 1.